The primary structure comprises 524 residues: Probable beta-1,4-xylosyltransferase IRX14 (524 aa).

Residues 1–51 (MMKSLLPQSQLRRSAAAASAARSSGGGAGSGGADGAGSDGGAGGRAPATST) lie on the Cytoplasmic side of the membrane. Positions 21–41 (ARSSGGGAGSGGADGAGSDGG) are disordered. Positions 24 to 41 (SGGGAGSGGADGAGSDGG) are enriched in gly residues. The helical; Signal-anchor for type II membrane protein transmembrane segment at 52-71 (FWFLLHALCCLVSLFLGFRF) threads the bilayer. The Lumenal portion of the chain corresponds to 72-524 (SRLLFFLLFS…SRSTTKRKEN (453 aa)). 4 N-linked (GlcNAc...) asparagine glycosylation sites follow: asparagine 132, asparagine 135, asparagine 240, and asparagine 353. Residues 492 to 524 (AELVDSKQDQEGRRLSRTDRSSRSRSTTKRKEN) are disordered. The span at 495–513 (VDSKQDQEGRRLSRTDRSS) shows a compositional bias: basic and acidic residues.

The protein belongs to the glycosyltransferase 43 family.

The protein resides in the golgi apparatus membrane. Probable beta-1,4-xylosyltransferase involved in xylan biosynthesis in cell walls. The polypeptide is Probable beta-1,4-xylosyltransferase IRX14 (Oryza sativa subsp. japonica (Rice)).